A 973-amino-acid chain; its full sequence is Protein HypA (973 aa).

The protein is Protein HypA (hypA) of Clostridium perfringens (strain 13 / Type A).